Reading from the N-terminus, the 241-residue chain is Leucyl/phenylalanyl-tRNA--protein transferase (241 aa).

It belongs to the L/F-transferase family.

The protein resides in the cytoplasm. It catalyses the reaction N-terminal L-lysyl-[protein] + L-leucyl-tRNA(Leu) = N-terminal L-leucyl-L-lysyl-[protein] + tRNA(Leu) + H(+). The catalysed reaction is N-terminal L-arginyl-[protein] + L-leucyl-tRNA(Leu) = N-terminal L-leucyl-L-arginyl-[protein] + tRNA(Leu) + H(+). The enzyme catalyses L-phenylalanyl-tRNA(Phe) + an N-terminal L-alpha-aminoacyl-[protein] = an N-terminal L-phenylalanyl-L-alpha-aminoacyl-[protein] + tRNA(Phe). Functionally, functions in the N-end rule pathway of protein degradation where it conjugates Leu, Phe and, less efficiently, Met from aminoacyl-tRNAs to the N-termini of proteins containing an N-terminal arginine or lysine. The chain is Leucyl/phenylalanyl-tRNA--protein transferase from Neisseria meningitidis serogroup A / serotype 4A (strain DSM 15465 / Z2491).